The chain runs to 484 residues: MLSLAKAKLAVVGIGRQCVAVRTLNGARAVHRSFSSSEHDQDSSTSENELFDIIISGGGMVGTAMACSLGLDPNLTGKKILLLEAGHEKKMDKIPETYSTRVSSISPGSATLLSGLGAWDHIVNMRCKPYNKMQVWDACSDALITFDKENLQDEMAYIVENDVIVAALTKQLQTLSDHVKVQYRTKVVKYTWPHPYHVSESIPWVQVALANGKTLHTKLLIGADGPNSMVRREAGIPTVKWNYDQSAVVAVLHLSEPTENNVAWQRFLPTGPIAMLPLSDTESSLVWSTSHQHAEELLQMDEESFVDAINSAFWSNENHSELVETAGSLFRMALSVLMPDSGSARQLPPSVSGIGPKSRVMFPLGMGHATEYIRHRVALIGDAAHRVHPLAGQGANLGFGDVSYLTQVLSQAAYNGKDIGAMQHLLEFETERQRHNLPMMTAIDLMKRLYSSNTAPMVLLRTFGLQATNAVPPLKEQIMAFASK.

Residues 1 to 41 constitute a mitochondrion transit peptide; the sequence is MLSLAKAKLAVVGIGRQCVAVRTLNGARAVHRSFSSSEHDQ.

The protein belongs to the UbiH/COQ6 family. In terms of assembly, component of a multi-subunit COQ enzyme complex, composed of at least coq3, coq4, coq5, coq6, coq7 and coq9. Interacts with coq8b and coq7. The cofactor is FAD.

The protein resides in the mitochondrion inner membrane. It localises to the golgi apparatus. It is found in the cell projection. It carries out the reaction a 4-hydroxy-3-(all-trans-polyprenyl)benzoate + 2 reduced [2Fe-2S]-[ferredoxin] + O2 + 2 H(+) = a 3,4-dihydroxy-5-(all-trans-polyprenyl)benzoate + 2 oxidized [2Fe-2S]-[ferredoxin] + H2O. The enzyme catalyses a 2-methoxy-6-(all-trans-polyprenyl)phenol + 2 reduced [2Fe-2S]-[ferredoxin] + O2 + 2 H(+) = a 2-methoxy-6-(all-trans-polyprenyl)benzene-1,4-diol + 2 oxidized [2Fe-2S]-[ferredoxin] + H2O. It functions in the pathway cofactor biosynthesis; ubiquinone biosynthesis. Its function is as follows. FAD-dependent monooxygenase required for two non-consecutive steps during ubiquinone biosynthesis. Required for the C5-ring hydroxylation during ubiquinone biosynthesis by catalyzing the hydroxylation of 4-hydroxy-3-(all-trans-polyprenyl)benzoic acid to 3,4-dihydroxy-5-(all-trans-polyprenyl)benzoic acid. Also acts downstream of coq4, for the C1-hydroxylation during ubiquinone biosynthesis by catalyzing the hydroxylation of 2-methoxy-6-(all-trans-polyprenyl)phenol to 2-methoxy-6-(all-trans-polyprenyl)benzene-1,4-diol. The electrons required for the hydroxylation reaction are funneled indirectly to coq6 from NADPH via a ferredoxin/ferredoxin reductase system. This Danio rerio (Zebrafish) protein is Ubiquinone biosynthesis monooxygenase COQ6, mitochondrial.